Consider the following 117-residue polypeptide: UPF0342 protein Bcer98_0695 (117 aa).

It belongs to the UPF0342 family.

The sequence is that of UPF0342 protein Bcer98_0695 from Bacillus cytotoxicus (strain DSM 22905 / CIP 110041 / 391-98 / NVH 391-98).